A 399-amino-acid chain; its full sequence is MSTAIDELQAIIAELKTELEEQKTSTRIARERIERMSAEVVDSNPYSRLMALQRMNIVKDYERIRDKAVAIVGVGGVGSVTADMLTRCGIGKLILFDYDKVELANMNRLFFTPDQAGLSKVEAAARTLSFINPDVVIETHNYNITTVENFDKFLTTISESGLQKGQPVDLVLSCVDNFEARMAINAACNENNLNWFESGVSENAVSGHIQFIRPGETACFACAPPLVVAENIDERTLKREGVCAASLPTTMGITAGLLVQNALKYLLNFGEVSDYLGYNALNDFFPKMTLKPNAECDDRYCLQRQKEFQARPQPKEQQIDEVVSNEPLHASNDWGIELVAEDAPVEQQTTNTTNVASGLRLAYEAPDKVDVNQSESAAVVNAGLPETSLDDLMAQMKSM.

ATP is bound by residues Gly-76, Asp-97, Lys-120, Asn-143, and Asn-177. The Zn(2+) site is built by Cys-219 and Cys-222. Cys-243 functions as the Glycyl thioester intermediate in the catalytic mechanism. The Zn(2+) site is built by Cys-296 and Cys-301.

The protein belongs to the ubiquitin-activating E1 family. UBA5 subfamily.

Functionally, E1-like enzyme which activates UFM1. The sequence is that of Ubiquitin-like modifier-activating enzyme 5 from Drosophila mojavensis (Fruit fly).